We begin with the raw amino-acid sequence, 201 residues long: Two-component response regulator ORR10 (201 aa).

Positions 10 to 142 constitute a Response regulatory domain; sequence HVLAVDDSLP…DMSKLKPHIL (133 aa). Aspartate 75 carries the 4-aspartylphosphate modification. Positions 149-201 are disordered; sequence HYQQEQHLQSNSESNNSSNPTSENSSSSTSTNSHKRKAVDEEILPHTIRPRHS. Over residues 158-180 the composition is skewed to low complexity; the sequence is SNSESNNSSNPTSENSSSSTSTN.

It belongs to the ARR family. Type-A subfamily. In terms of processing, two-component system major event consists of a His-to-Asp phosphorelay between a sensor histidine kinase (HK) and a response regulator (RR). In plants, the His-to-Asp phosphorelay involves an additional intermediate named Histidine-containing phosphotransfer protein (HPt). This multistep phosphorelay consists of a His-Asp-His-Asp sequential transfer of a phosphate group between first a His and an Asp of the HK protein, followed by the transfer to a conserved His of the HPt protein and finally the transfer to an Asp in the receiver domain of the RR protein. Expressed in mature leaves, and at low levels in roots, shoots and flowers.

In terms of biological role, functions as a response regulator involved in His-to-Asp phosphorelay signal transduction system. Phosphorylation of the Asp residue in the receiver domain activates the ability of the protein to promote the transcription of target genes. Type-A response regulators seem to act as negative regulators of the cytokinin signaling. The chain is Two-component response regulator ORR10 from Oryza sativa subsp. indica (Rice).